The primary structure comprises 193 residues: Acyl carrier protein phosphodiesterase (193 aa).

It belongs to the AcpH family.

It catalyses the reaction holo-[ACP] + H2O = apo-[ACP] + (R)-4'-phosphopantetheine + H(+). Its function is as follows. Converts holo-ACP to apo-ACP by hydrolytic cleavage of the phosphopantetheine prosthetic group from ACP. The polypeptide is Acyl carrier protein phosphodiesterase (Escherichia coli O157:H7).